The sequence spans 161 residues: Phage-like element PBSX protein XkdI (161 aa).

It to B.subtilis YqbI.

This Bacillus subtilis (strain 168) protein is Phage-like element PBSX protein XkdI (xkdI).